Consider the following 390-residue polypeptide: Lipoyl synthase, mitochondrial (390 aa).

A mitochondrion-targeting transit peptide spans 1–19 (MPTLLRILRPPRSPFTRCL). Residues 23 to 48 (ATPSSSGSSSRSKFTESLETGPGLDD) form a disordered region. Residues cysteine 98, cysteine 103, cysteine 109, cysteine 136, cysteine 140, cysteine 143, and serine 350 each coordinate [4Fe-4S] cluster. Residues 119 to 339 (AEGRSAATAT…KEVAENLGFL (221 aa)) enclose the Radical SAM core domain.

It belongs to the radical SAM superfamily. Lipoyl synthase family. The cofactor is [4Fe-4S] cluster.

Its subcellular location is the mitochondrion. The enzyme catalyses [[Fe-S] cluster scaffold protein carrying a second [4Fe-4S](2+) cluster] + N(6)-octanoyl-L-lysyl-[protein] + 2 oxidized [2Fe-2S]-[ferredoxin] + 2 S-adenosyl-L-methionine + 4 H(+) = [[Fe-S] cluster scaffold protein] + N(6)-[(R)-dihydrolipoyl]-L-lysyl-[protein] + 4 Fe(3+) + 2 hydrogen sulfide + 2 5'-deoxyadenosine + 2 L-methionine + 2 reduced [2Fe-2S]-[ferredoxin]. The protein operates within protein modification; protein lipoylation via endogenous pathway; protein N(6)-(lipoyl)lysine from octanoyl-[acyl-carrier-protein]: step 2/2. In terms of biological role, catalyzes the radical-mediated insertion of two sulfur atoms into the C-6 and C-8 positions of the octanoyl moiety bound to the lipoyl domains of lipoate-dependent enzymes, thereby converting the octanoylated domains into lipoylated derivatives. This chain is Lipoyl synthase, mitochondrial, found in Laccaria bicolor (strain S238N-H82 / ATCC MYA-4686) (Bicoloured deceiver).